Consider the following 328-residue polypeptide: Formimidoylglutamase (328 aa).

Mn(2+) contacts are provided by His133, Asp159, His161, Asp163, Asp253, and Asp255.

The protein belongs to the arginase family. Mn(2+) serves as cofactor.

The enzyme catalyses N-formimidoyl-L-glutamate + H2O = formamide + L-glutamate. It participates in amino-acid degradation; L-histidine degradation into L-glutamate; L-glutamate from N-formimidoyl-L-glutamate (hydrolase route): step 1/1. Functionally, catalyzes the conversion of N-formimidoyl-L-glutamate to L-glutamate and formamide. The chain is Formimidoylglutamase from Streptococcus pyogenes serotype M6 (strain ATCC BAA-946 / MGAS10394).